The chain runs to 667 residues: Glycine--tRNA ligase beta subunit (667 aa).

The protein belongs to the class-II aminoacyl-tRNA synthetase family. Tetramer of two alpha and two beta subunits.

It is found in the cytoplasm. It catalyses the reaction tRNA(Gly) + glycine + ATP = glycyl-tRNA(Gly) + AMP + diphosphate. In Rickettsia canadensis (strain McKiel), this protein is Glycine--tRNA ligase beta subunit.